We begin with the raw amino-acid sequence, 160 residues long: Putative pre-16S rRNA nuclease (160 aa).

This sequence belongs to the YqgF nuclease family.

It is found in the cytoplasm. Could be a nuclease involved in processing of the 5'-end of pre-16S rRNA. In Chelativorans sp. (strain BNC1), this protein is Putative pre-16S rRNA nuclease.